The chain runs to 484 residues: MEAEEAQHGASPPISAIEEFSIIPEAPMRSSQVSALGLEAQEDEDPSYKWREEHRLSATQQSELRDVCDYAIETMPSFPKEGSADVEPNQESLVAEACDTPEHWEAVPQSLAGRQARTLAPPELWACPIQSEHLDMAPFSSDLGSEEEEVEFWPGLTSLTLGSGQAEEEEETSSDNSGQTRYYSPCEEHPAETNQNEGAESGTIRQGEELPSEELQESQGLLHPQEVQVLEEQGQQEAGFRGEGTLREDVCADGLLGEEQMIEQVNDEKGEQKQKQEQVQDVMLGRQGERMGLTGEPEGLNDGEWEQEDMERKAQGQGGPEQGEERKRELQVPEENRADSQDEKSQTFLGKSEEVTGKQEDHGIKEKGVPVSGQEAKEPESWDGGRLGAVGRARSREEENEHHGPSMPALIAPEDSPHCDLFPGASYLVTQIPGTQTESRAEELSPAALSPLLEPIRCSHQPISLLGSFLTEESPDKEKLLSVL.

Residues Phe139–His418 are disordered. Ser184 carries the phosphoserine modification. Residues Glu217 to Glu237 show a composition bias toward low complexity. The segment covering Asn266–Gln278 has biased composition (basic and acidic residues). The span at Gly299–Asp309 shows a compositional bias: acidic residues. 2 stretches are compositionally biased toward basic and acidic residues: residues Gly323–Gly368 and Arg394–Gly404.

This chain is Rho guanine nucleotide exchange factor 35 (ARHGEF35), found in Homo sapiens (Human).